The following is a 313-amino-acid chain: Formimidoylglutamase (313 aa).

Mn(2+) is bound by residues His-130, Asp-155, His-157, Asp-159, Asp-241, and Asp-243.

The protein belongs to the arginase family. Mn(2+) is required as a cofactor.

It catalyses the reaction N-formimidoyl-L-glutamate + H2O = formamide + L-glutamate. It functions in the pathway amino-acid degradation; L-histidine degradation into L-glutamate; L-glutamate from N-formimidoyl-L-glutamate (hydrolase route): step 1/1. Its function is as follows. Catalyzes the conversion of N-formimidoyl-L-glutamate to L-glutamate and formamide. This Citrobacter koseri (strain ATCC BAA-895 / CDC 4225-83 / SGSC4696) protein is Formimidoylglutamase.